A 158-amino-acid polypeptide reads, in one-letter code: Ribonuclease H (158 aa).

The region spanning 3 to 144 (ELKLIHIFTD…CDQLARAAAE (142 aa)) is the RNase H type-1 domain. Positions 12, 50, 72, and 136 each coordinate Mg(2+).

The protein belongs to the RNase H family. In terms of assembly, monomer. Requires Mg(2+) as cofactor.

It is found in the cytoplasm. The catalysed reaction is Endonucleolytic cleavage to 5'-phosphomonoester.. Endonuclease that specifically degrades the RNA of RNA-DNA hybrids. This is Ribonuclease H from Shewanella sp. (strain MR-4).